Consider the following 829-residue polypeptide: Colorectal mutant cancer protein (829 aa).

Disordered regions lie at residues arginine 114–serine 139, threonine 282–aspartate 320, and glutamate 672–alanine 700. Residues glutamate 123 to aspartate 132 are compositionally biased toward basic and acidic residues. Over residues glutamine 285 to leucine 312 the composition is skewed to polar residues. Over residues serine 689 to alanine 698 the composition is skewed to basic and acidic residues. The Nuclear localization signal signature appears at lysine 766–lysine 782. Positions glutamate 826–leucine 829 match the PDZ-binding motif. Serine 828 carries the post-translational modification Phosphoserine.

This sequence belongs to the MCC family. In terms of assembly, interacts with SCRIB (via phosphorylated PDZ-binding motif), EZR, SNX27, NHERF1 and NHERF2. Interacts with CTNNB1; the interaction is enhanced upon Wnt stimulation. Interacts with MYH10. Interacts with CCAR2. In terms of tissue distribution, expressed in a variety of tissues.

It localises to the cell membrane. The protein resides in the cell projection. The protein localises to the lamellipodium. Its subcellular location is the nucleus. It is found in the cytoplasm. Candidate for the putative colorectal tumor suppressor gene located at 5q21. Suppresses cell proliferation and the Wnt/b-catenin pathway in colorectal cancer cells. Inhibits DNA binding of b-catenin/TCF/LEF transcription factors. Involved in cell migration independently of RAC1, CDC42 and p21-activated kinase (PAK) activation. Represses the beta-catenin pathway (canonical Wnt signaling pathway) in a CCAR2-dependent manner by sequestering CCAR2 to the cytoplasm, thereby impairing its ability to inhibit SIRT1 which is involved in the deacetylation and negative regulation of beta-catenin (CTNB1) transcriptional activity. This is Colorectal mutant cancer protein (MCC) from Homo sapiens (Human).